Consider the following 288-residue polypeptide: 33 kDa chaperonin (288 aa).

Cystine bridges form between Cys-235–Cys-237 and Cys-268–Cys-271.

It belongs to the HSP33 family. Post-translationally, under oxidizing conditions two disulfide bonds are formed involving the reactive cysteines. Under reducing conditions zinc is bound to the reactive cysteines and the protein is inactive.

The protein localises to the cytoplasm. In terms of biological role, redox regulated molecular chaperone. Protects both thermally unfolding and oxidatively damaged proteins from irreversible aggregation. Plays an important role in the bacterial defense system toward oxidative stress. The polypeptide is 33 kDa chaperonin (Streptococcus thermophilus (strain ATCC BAA-491 / LMD-9)).